Here is a 641-residue protein sequence, read N- to C-terminus: Fructose-1,6-bisphosphatase class 3 (641 aa).

Belongs to the FBPase class 3 family. Mn(2+) serves as cofactor.

It catalyses the reaction beta-D-fructose 1,6-bisphosphate + H2O = beta-D-fructose 6-phosphate + phosphate. It functions in the pathway carbohydrate biosynthesis; gluconeogenesis. This is Fructose-1,6-bisphosphatase class 3 from Bacillus velezensis (strain DSM 23117 / BGSC 10A6 / LMG 26770 / FZB42) (Bacillus amyloliquefaciens subsp. plantarum).